The primary structure comprises 201 residues: Inosine triphosphate pyrophosphatase (201 aa).

An ITP-binding site is contributed by 16–21 (TGNAKK). Glutamate 44 is a Mg(2+) binding site. Residues lysine 56, 72-73 (DT), lysine 89, 148-151 (FGWD), lysine 171, and 176-177 (HR) each bind ITP.

It belongs to the HAM1 NTPase family. Homodimer. It depends on Mg(2+) as a cofactor. Mn(2+) serves as cofactor.

The protein resides in the cytoplasm. It carries out the reaction ITP + H2O = IMP + diphosphate + H(+). It catalyses the reaction dITP + H2O = dIMP + diphosphate + H(+). The catalysed reaction is XTP + H2O = XMP + diphosphate + H(+). In terms of biological role, pyrophosphatase that hydrolyzes non-canonical purine nucleotides such as inosine triphosphate (ITP), deoxyinosine triphosphate (dITP) or xanthosine 5'-triphosphate (XTP) to their respective monophosphate derivatives. The enzyme does not distinguish between the deoxy- and ribose forms. Probably excludes non-canonical purines from RNA and DNA precursor pools, thus preventing their incorporation into RNA and DNA and avoiding chromosomal lesions. In Zea mays (Maize), this protein is Inosine triphosphate pyrophosphatase.